The sequence spans 172 residues: MAHFKEYQVIGRRLPTESVPEPKLFRMRIFASNEVIAKSRYWYFLQKLHKVKKASGEIVSINQINEAHPTKVKNFGVWVRYDSRSGTHNMYKEIRDVSRVAAVETLYQDMAARHRARFRSIHILKVAEIEKTADVKRQYVKQFLTKDLKFPLPHRVQKSTKTFSYKRPSTFY.

At Ser-32 the chain carries Phosphoserine. Glycyl lysine isopeptide (Lys-Gly) (interchain with G-Cter in ubiquitin) cross-links involve residues Lys-125, Lys-131, and Lys-149.

The protein belongs to the eukaryotic ribosomal protein eL20 family. Component of the large ribosomal subunit (LSU). Mature yeast ribosomes consist of a small (40S) and a large (60S) subunit. The 40S small subunit contains 1 molecule of ribosomal RNA (18S rRNA) and 33 different proteins (encoded by 57 genes). The large 60S subunit contains 3 rRNA molecules (25S, 5.8S and 5S rRNA) and 46 different proteins (encoded by 81 genes). eL20 forms multiple interactions with RNA and proteins in the central protuberance, connecting components of core functional centers that are located far apart.

Its subcellular location is the cytoplasm. Its function is as follows. Component of the ribosome, a large ribonucleoprotein complex responsible for the synthesis of proteins in the cell. The small ribosomal subunit (SSU) binds messenger RNAs (mRNAs) and translates the encoded message by selecting cognate aminoacyl-transfer RNA (tRNA) molecules. The large subunit (LSU) contains the ribosomal catalytic site termed the peptidyl transferase center (PTC), which catalyzes the formation of peptide bonds, thereby polymerizing the amino acids delivered by tRNAs into a polypeptide chain. The nascent polypeptides leave the ribosome through a tunnel in the LSU and interact with protein factors that function in enzymatic processing, targeting, and the membrane insertion of nascent chains at the exit of the ribosomal tunnel. The sequence is that of Large ribosomal subunit protein eL20A from Saccharomyces cerevisiae (strain ATCC 204508 / S288c) (Baker's yeast).